The chain runs to 362 residues: S-adenosylmethionine:tRNA ribosyltransferase-isomerase (362 aa).

This sequence belongs to the QueA family. Monomer.

The protein localises to the cytoplasm. It carries out the reaction 7-aminomethyl-7-carbaguanosine(34) in tRNA + S-adenosyl-L-methionine = epoxyqueuosine(34) in tRNA + adenine + L-methionine + 2 H(+). Its pathway is tRNA modification; tRNA-queuosine biosynthesis. Transfers and isomerizes the ribose moiety from AdoMet to the 7-aminomethyl group of 7-deazaguanine (preQ1-tRNA) to give epoxyqueuosine (oQ-tRNA). This is S-adenosylmethionine:tRNA ribosyltransferase-isomerase from Yersinia enterocolitica serotype O:8 / biotype 1B (strain NCTC 13174 / 8081).